The primary structure comprises 325 residues: GMP reductase (325 aa).

Cys174 (thioimidate intermediate) is an active-site residue. Residue 203-226 participates in NADP(+) binding; sequence IVADGGIRNNGDIAKSIRFGASMC.

The protein belongs to the IMPDH/GMPR family. GuaC type 2 subfamily.

It catalyses the reaction IMP + NH4(+) + NADP(+) = GMP + NADPH + 2 H(+). Functionally, catalyzes the irreversible NADPH-dependent deamination of GMP to IMP. It functions in the conversion of nucleobase, nucleoside and nucleotide derivatives of G to A nucleotides, and in maintaining the intracellular balance of A and G nucleotides. The sequence is that of GMP reductase from Ligilactobacillus salivarius (strain UCC118) (Lactobacillus salivarius).